The primary structure comprises 361 residues: RNA 3'-terminal phosphate cyclase (361 aa).

Residues glutamine 109 and 293–297 (HLADQ) each bind ATP. The active-site Tele-AMP-histidine intermediate is histidine 319.

This sequence belongs to the RNA 3'-terminal cyclase family. Type 1 subfamily.

The protein resides in the cytoplasm. The catalysed reaction is a 3'-end 3'-phospho-ribonucleotide-RNA + ATP = a 3'-end 2',3'-cyclophospho-ribonucleotide-RNA + AMP + diphosphate. Its function is as follows. Catalyzes the conversion of 3'-phosphate to a 2',3'-cyclic phosphodiester at the end of RNA. The mechanism of action of the enzyme occurs in 3 steps: (A) adenylation of the enzyme by ATP; (B) transfer of adenylate to an RNA-N3'P to produce RNA-N3'PP5'A; (C) and attack of the adjacent 2'-hydroxyl on the 3'-phosphorus in the diester linkage to produce the cyclic end product. The biological role of this enzyme is unknown but it is likely to function in some aspects of cellular RNA processing. The sequence is that of RNA 3'-terminal phosphate cyclase from Methylococcus capsulatus (strain ATCC 33009 / NCIMB 11132 / Bath).